The sequence spans 316 residues: Transaldolase (316 aa).

Catalysis depends on K131, which acts as the Schiff-base intermediate with substrate.

Belongs to the transaldolase family. Type 1 subfamily. In terms of assembly, homodimer.

It is found in the cytoplasm. It carries out the reaction D-sedoheptulose 7-phosphate + D-glyceraldehyde 3-phosphate = D-erythrose 4-phosphate + beta-D-fructose 6-phosphate. It functions in the pathway carbohydrate degradation; pentose phosphate pathway; D-glyceraldehyde 3-phosphate and beta-D-fructose 6-phosphate from D-ribose 5-phosphate and D-xylulose 5-phosphate (non-oxidative stage): step 2/3. In terms of biological role, transaldolase is important for the balance of metabolites in the pentose-phosphate pathway. The polypeptide is Transaldolase (Buchnera aphidicola subsp. Baizongia pistaciae (strain Bp)).